A 543-amino-acid chain; its full sequence is Carboxypeptidase Y homolog A (543 aa).

Residues 1-17 (MRVLPATLLVGAATAAV) form the signal peptide. Positions 18 to 124 (PPFQQILGLP…KLEAYDLRVK (107 aa)) are excised as a propeptide. 5 cysteine pairs are disulfide-bonded: Cys179-Cys419, Cys313-Cys327, Cys337-Cys360, Cys344-Cys353, and Cys382-Cys389. N-linked (GlcNAc...) asparagine glycosylation is present at Asn210. Ser266 is a catalytic residue. Asp458 is a catalytic residue. The N-linked (GlcNAc...) asparagine glycan is linked to Asn509. Residue His520 is part of the active site.

Belongs to the peptidase S10 family.

It localises to the vacuole. The enzyme catalyses Release of a C-terminal amino acid with broad specificity.. Its function is as follows. Vacuolar carboxypeptidase involved in degradation of small peptides. Digests preferentially peptides containing an aliphatic or hydrophobic residue in P1' position, as well as methionine, leucine or phenylalanine in P1 position of ester substrate. The protein is Carboxypeptidase Y homolog A (cpyA) of Aspergillus clavatus (strain ATCC 1007 / CBS 513.65 / DSM 816 / NCTC 3887 / NRRL 1 / QM 1276 / 107).